We begin with the raw amino-acid sequence, 1022 residues long: MVIAVEGGFVHEEEEVDHPIRYLPLGRVYSSSAPCPLPKKPRSAEDGKPPVIVYYRRRRKKPRVEGPPPSPATAPPMLHPREDDEDEEVTRRKGSLKYELLSLGQAPPALGGDGEEPARRRCLRRSGGAERRGYFSEPKRRQRQGVHKEAASSAGRRWLELEIEAADPLAFVGLGCKVFWPLDEDWYKGSITGYNEATKKHSVKYDDGESEDLNLADERIKFSISSEEMKCRNLKFGISNLNKRGYDELLALAVSLHDYQGLDPGDLVWAKLTGHAMWPAVVVDESNVPANRALKPGRLDQSILVQFFGTHDFARIKLKQAVPFLNGLLSSLHLKCKQARFYRSLEEAKEFLCTQLLPENMLQLQKSMEKGSSDANSNKDVHSCDNLSEDKTAESGGDYDEMTPIELGNLRVSKLGRIVTDSDYFHNKKHIWPEGYTAFRKFRSVKDPHVVILYKMEVLRNSDIKARPLFRVTSEDGTQIDGSTPNTCWKEIYCRLKEKQRNVASGLDRDVCQGSGSYMFGFSNPQIRQLIQELPNARSCLKYFENAGDTFRGYRAVHVNWKDLDYCSVCDMDEEYEDNLFLQCDKCRMMVHARCYGELEPLNGVLWLCNLCRPEAPRVSPRCCLCPVTGGAMKPTTDGRWAHLACAIWIPETCLKDVKRMEPIDGLSRINKDRWKLLCSICGVAYGACIQCSHPTCRVAYHPLCARAADLCVELEDDDKIHLMLLDEDEDPCIRLLSYCKKHRQPSTERPSLESNLAKPAVVVQTDAVPPSGCARTEPYNIHGRRGQKQPQVMATASVKRLYVENMPYIVSGFCQNRVGHDAISEPIQSVGFLDVAHQEAVGNVSSMIEKYKSMKATFRRRLAFGKSRIHGFGVFAKVSHKAGDMMIEYIGELVRPPISDIRERRIYNSLVGAGTYMFRIDDERVIDATRAGSIAHLINHSCEPNCYSRVISVLGDEHIIIFAKRDINPWEELTYDYRFVSSDQRLPCYCGFPKCRGVVNDVEAEGQSAKIRVNRSELFQQ.

Residues 31–151 (SSAPCPLPKK…QRQGVHKEAA (121 aa)) form a disordered region. Residues 65–78 (EGPPPSPATAPPML) are compositionally biased toward pro residues. Residues 127–139 (GGAERRGYFSEPK) are compositionally biased toward basic and acidic residues. One can recognise a PWWP domain in the interval 264 to 327 (PGDLVWAKLT…LKQAVPFLNG (64 aa)). A compositionally biased stretch (basic and acidic residues) spans 367–393 (SMEKGSSDANSNKDVHSCDNLSEDKTA). Residues 367–399 (SMEKGSSDANSNKDVHSCDNLSEDKTAESGGDY) are disordered. The 60-residue stretch at 402-461 (MTPIELGNLRVSKLGRIVTDSDYFHNKKHIWPEGYTAFRKFRSVKDPHVVILYKMEVLRN) folds into the FYR N-terminal domain. Positions 465–548 (KARPLFRVTS…SCLKYFENAG (84 aa)) constitute an FYR C-terminal domain. Residues 553-609 (GYRAVHVNWKDLDYCSVCDMDEEYEDNLFLQCDKCRMMVHARCYGELEPLNGVLWLC) form a Phorbol-ester/DAG-type zinc finger. 2 consecutive PHD-type zinc fingers follow at residues 564-615 (LDYC…CRPE) and 677-744 (LLCS…KKHR). The extended PHD domain (ePHD) stretch occupies residues 620 to 744 (SPRCCLCPVT…RLLSYCKKHR (125 aa)). An SET domain is found at 861–979 (RRLAFGKSRI…PWEELTYDYR (119 aa)). Cys-943 contacts Zn(2+). Tyr-978 is an S-adenosyl-L-methionine binding site. The Post-SET domain maps to 985 to 1001 (QRLPCYCGFPKCRGVVN). Residues Cys-989, Cys-991, and Cys-996 each coordinate Zn(2+).

This sequence belongs to the class V-like SAM-binding methyltransferase superfamily. Histone-lysine methyltransferase family. TRX/MLL subfamily. As to quaternary structure, interacts with EHD3. As to expression, expressed in leaf blades and panicles.

The protein localises to the nucleus. It carries out the reaction L-lysyl(4)-[histone H3] + S-adenosyl-L-methionine = N(6)-methyl-L-lysyl(4)-[histone H3] + S-adenosyl-L-homocysteine + H(+). In terms of biological role, possesses histone H3 methyltransferase activity in vitro. Methylates 'Lys-4' of histone H3. H3 'Lys-4' methylation represents a specific tag for epigenetic transcriptional activation. Functions as a receptor for the lipid messenger phosphatidylinositol 5-phosphate (PI5P), which negatively regulates its transcriptional activation activity. Involved in the regulation of flowering time and floral induction under long day (LD) conditions. Acts as an activator of flowering under LD conditions. May function through binding to EHD3, a repressor of GHD7. This is Histone-lysine N-methyltransferase TRX1 from Oryza sativa subsp. japonica (Rice).